Reading from the N-terminus, the 170-residue chain is F1 capsule antigen (170 aa).

The N-terminal stretch at 1-21 (MKKISSVIAIALFGTIATANA) is a signal peptide. The segment at 100–150 (GNNHQFTTKVIGKDSRDFDISPKVNGENLVGDDVVLATGSQDFFVRSIGSK) is contains potential antigenic determinants that may stimulate T-cells.

Its subcellular location is the secreted. It localises to the capsule. This is F1 capsule antigen (caf1) from Yersinia pestis.